We begin with the raw amino-acid sequence, 235 residues long: 15,16-dihydrobiliverdin:ferredoxin oxidoreductase (235 aa).

It belongs to the HY2 family.

It carries out the reaction 15,16-dihydrobiliverdin + oxidized 2[4Fe-4S]-[ferredoxin] = biliverdin IXalpha + reduced 2[4Fe-4S]-[ferredoxin] + 2 H(+). Catalyzes the two-electron reduction of biliverdin IX-alpha at the C15 methine bridge. This chain is 15,16-dihydrobiliverdin:ferredoxin oxidoreductase (pebA), found in Parasynechococcus marenigrum (strain WH8102).